A 316-amino-acid polypeptide reads, in one-letter code: Cytochrome c oxidase assembly protein COX18, mitochondrial (316 aa).

Residues 164–184 traverse the membrane as a helical segment; it reads WKNALLPMVQIPLWVTVSMGI. The Mitochondrial matrix portion of the chain corresponds to 185–213; the sequence is RTLTETQLIESFYPSWFSALGFSSFDLSS. Residues 214–234 form a helical membrane-spanning segment; that stretch reads PLVAMPLLAPILVGTLAVLNV. At 235 to 274 the chain is on the mitochondrial intermembrane side; the sequence is ELNGRLMFSSSLSSQGIKTISRNSTRVQEAMTSILNVSRL. Residues 275–295 form a helical membrane-spanning segment; sequence GCVVMLAMSSQAPFLLSLYWI. Residues 296-316 lie on the Mitochondrial matrix side of the membrane; the sequence is SSQLFSLVQNIILNWIYPYQR.

It belongs to the OXA1/ALB3/YidC family. Interacts with PNT1 and MSS2.

It is found in the mitochondrion inner membrane. Required for the insertion of integral membrane proteins into the mitochondrial inner membrane. Essential for the activity and assembly of cytochrome c oxidase. Plays a central role in the translocation and export of the C-terminal part of the COX2 protein into the mitochondrial intermembrane space. The chain is Cytochrome c oxidase assembly protein COX18, mitochondrial (COX18) from Saccharomyces cerevisiae (strain ATCC 204508 / S288c) (Baker's yeast).